The chain runs to 99 residues: Acylphosphatase (99 aa).

One can recognise an Acylphosphatase-like domain in the interval 5-97; the sequence is VRQVMIRGRV…RPGERFSQLP (93 aa). Active-site residues include R20 and N38.

The protein belongs to the acylphosphatase family.

The enzyme catalyses an acyl phosphate + H2O = a carboxylate + phosphate + H(+). This Nitrobacter winogradskyi (strain ATCC 25391 / DSM 10237 / CIP 104748 / NCIMB 11846 / Nb-255) protein is Acylphosphatase (acyP).